The sequence spans 533 residues: 2-succinyl-5-enolpyruvyl-6-hydroxy-3-cyclohexene-1-carboxylate synthase (533 aa).

The protein belongs to the TPP enzyme family. MenD subfamily. In terms of assembly, homodimer. Mg(2+) is required as a cofactor. Requires Mn(2+) as cofactor. It depends on thiamine diphosphate as a cofactor.

The catalysed reaction is isochorismate + 2-oxoglutarate + H(+) = 5-enolpyruvoyl-6-hydroxy-2-succinyl-cyclohex-3-ene-1-carboxylate + CO2. It participates in quinol/quinone metabolism; 1,4-dihydroxy-2-naphthoate biosynthesis; 1,4-dihydroxy-2-naphthoate from chorismate: step 2/7. The protein operates within quinol/quinone metabolism; menaquinone biosynthesis. In terms of biological role, catalyzes the thiamine diphosphate-dependent decarboxylation of 2-oxoglutarate and the subsequent addition of the resulting succinic semialdehyde-thiamine pyrophosphate anion to isochorismate to yield 2-succinyl-5-enolpyruvyl-6-hydroxy-3-cyclohexene-1-carboxylate (SEPHCHC). This chain is 2-succinyl-5-enolpyruvyl-6-hydroxy-3-cyclohexene-1-carboxylate synthase, found in Akkermansia muciniphila (strain ATCC BAA-835 / DSM 22959 / JCM 33894 / BCRC 81048 / CCUG 64013 / CIP 107961 / Muc).